Reading from the N-terminus, the 219-residue chain is Ras-related protein Rab-3B (219 aa).

Alanine 2 is modified (N-acetylalanine). GTP-binding residues include serine 31, serine 32, valine 33, glycine 34, lysine 35, threonine 36, serine 37, proline 49, and serine 53. Threonine 36 contributes to the Mg(2+) binding site. Positions 45–58 (DTFTPAFVSTVGID) match the Switch 1 motif. Mg(2+) is bound by residues threonine 54 and aspartate 77. Positions 78 to 96 (TAGQERYRTITTAYYRGAM) match the Switch 2 motif. Position 80 (glycine 80) interacts with GTP. Threonine 86 is subject to Phosphothreonine. 5 residues coordinate GTP: asparagine 135, lysine 136, aspartate 138, alanine 166, and lysine 167. Residue serine 188 is modified to Phosphoserine. 2 S-geranylgeranyl cysteine lipidation sites follow: cysteine 217 and cysteine 219. Cysteine methyl ester is present on cysteine 219.

The protein belongs to the small GTPase superfamily. Rab family. Interacts with RIMS1, RIMS2, RPH3A and RPH3AL. The GTP-bound form interacts with GAS8/DRC4 (via coiled-coil domains). Interacts with GDI2, CHM and CHML; phosphorylation at Thr-86 disrupts these interactions. Interacts with MADD (via uDENN domain); the GTP-bound form is preferred for interaction. Requires Mg(2+) as cofactor. In terms of processing, phosphorylation of Thr-86 in the switch II region by LRRK2 prevents the association of RAB regulatory proteins, including CHM, CHML and RAB GDP dissociation inhibitor GDI2.

The protein resides in the cell membrane. It is found in the golgi apparatus. The enzyme catalyses GTP + H2O = GDP + phosphate + H(+). Its activity is regulated as follows. Regulated by guanine nucleotide exchange factors (GEFs) which promote the exchange of bound GDP for free GTP. Regulated by GTPase activating proteins (GAPs) which increase the GTP hydrolysis activity. Inhibited by GDP dissociation inhibitors (GDIs) which prevent Rab-GDP dissociation. Its function is as follows. The small GTPases Rab are key regulators of intracellular membrane trafficking, from the formation of transport vesicles to their fusion with membranes. Rabs cycle between an inactive GDP-bound form and an active GTP-bound form that is able to recruit to membranes different sets of downstream effectors directly responsible for vesicle formation, movement, tethering and fusion. This chain is Ras-related protein Rab-3B (RAB3B), found in Bos taurus (Bovine).